Here is a 103-residue protein sequence, read N- to C-terminus: Large ribosomal subunit protein bL21 (103 aa).

Belongs to the bacterial ribosomal protein bL21 family. As to quaternary structure, part of the 50S ribosomal subunit. Contacts protein L20.

This protein binds to 23S rRNA in the presence of protein L20. The polypeptide is Large ribosomal subunit protein bL21 (Shewanella amazonensis (strain ATCC BAA-1098 / SB2B)).